The primary structure comprises 307 residues: MSKHVAVLMGGWSSEREISLRSGNACAAALEGEGYRVTRVDVGPDIATVLTELRPDAALNALHGPAGEDGTIQGLLEILKIPYTHSGVLASALAMHKERAKTVMRAAGVSVPEGRVVNRHDAAKSHPLTPPYVVKPIAEGSSMGVIIVRDERSHPPQILASDEWVYGEEVLAETYVAGRELTCAVLGDRALGVTEIKPVSGEWYDFDAKYAGGGSIHVLPADLKLNIYQRVQELALTAHQALGCRGVSRADLRYDDTPGGTGALVVLEVNTQPGMTQTSLVPEIAAHAGQSFGELVRWMVEDASLNR.

The ATP-grasp domain occupies 101–301; the sequence is KTVMRAAGVS…FGELVRWMVE (201 aa). An ATP-binding site is contributed by 127-182; it reads PLTPPYVVKPIAEGSSMGVIIVRDERSHPPQILASDEWVYGEEVLAETYVAGRELT. Positions 251, 268, and 270 each coordinate Mg(2+).

Belongs to the D-alanine--D-alanine ligase family. It depends on Mg(2+) as a cofactor. Mn(2+) is required as a cofactor.

The protein localises to the cytoplasm. It catalyses the reaction 2 D-alanine + ATP = D-alanyl-D-alanine + ADP + phosphate + H(+). It functions in the pathway cell wall biogenesis; peptidoglycan biosynthesis. Functionally, cell wall formation. The polypeptide is D-alanine--D-alanine ligase (Methylorubrum extorquens (strain CM4 / NCIMB 13688) (Methylobacterium extorquens)).